Consider the following 420-residue polypeptide: Gamma-glutamyl phosphate reductase (420 aa).

Belongs to the gamma-glutamyl phosphate reductase family.

Its subcellular location is the cytoplasm. It catalyses the reaction L-glutamate 5-semialdehyde + phosphate + NADP(+) = L-glutamyl 5-phosphate + NADPH + H(+). Its pathway is amino-acid biosynthesis; L-proline biosynthesis; L-glutamate 5-semialdehyde from L-glutamate: step 2/2. In terms of biological role, catalyzes the NADPH-dependent reduction of L-glutamate 5-phosphate into L-glutamate 5-semialdehyde and phosphate. The product spontaneously undergoes cyclization to form 1-pyrroline-5-carboxylate. The chain is Gamma-glutamyl phosphate reductase from Streptococcus pneumoniae (strain JJA).